Here is a 642-residue protein sequence, read N- to C-terminus: Threonine--tRNA ligase (642 aa).

The TGS domain maps to 1–61; the sequence is MPIITLPDGS…EQDSQLAIIT (61 aa). A catalytic region spans residues 243-534; the sequence is DHRKIGKQLD…LTEEYAGFFP (292 aa). The Zn(2+) site is built by Cys-334, His-385, and His-511.

Belongs to the class-II aminoacyl-tRNA synthetase family. As to quaternary structure, homodimer. The cofactor is Zn(2+).

It localises to the cytoplasm. The catalysed reaction is tRNA(Thr) + L-threonine + ATP = L-threonyl-tRNA(Thr) + AMP + diphosphate + H(+). Functionally, catalyzes the attachment of threonine to tRNA(Thr) in a two-step reaction: L-threonine is first activated by ATP to form Thr-AMP and then transferred to the acceptor end of tRNA(Thr). Also edits incorrectly charged L-seryl-tRNA(Thr). This Proteus mirabilis (strain HI4320) protein is Threonine--tRNA ligase.